We begin with the raw amino-acid sequence, 2266 residues long: Little elongation complex subunit 1 (2266 aa).

A coiled-coil region spans residues 23–186; sequence CASLQQNLNE…KQKNEKELRH (164 aa). Disordered stretches follow at residues 223–259 and 517–540; these read GEGSRCVPEKPAKAITSSRVPGEDGTLPPTQGSPLRT and PAQEKEAAPGKSELCSSPLGKRPL. The segment covering 250–259 has biased composition (polar residues); the sequence is PPTQGSPLRT. Residues S255, S533, S558, and S589 each carry the phosphoserine modification. The segment at 591–623 is disordered; the sequence is ELEKEKEDTQGFTLGESPESEDDDSGDGMDVAG. Positions 608-617 are enriched in acidic residues; the sequence is PESEDDDSGD. S707 is subject to Phosphoserine. T832 is modified (phosphothreonine). S925 carries the phosphoserine modification. The tract at residues 925–955 is disordered; it reads SPEVSASRRKLDFNSPGGSSPVENSDCSTNS. The segment covering 940-955 has biased composition (polar residues); it reads PGGSSPVENSDCSTNS. At S958 the chain carries Phosphoserine. Disordered regions lie at residues 977–1001 and 1107–1133; these read VQGDGQKQRQPQATDLDSSGTHGSE and TEVESEAFSCSEGSEQQDAPDDSQKNL. Residues 984-998 are compositionally biased toward polar residues; sequence QRQPQATDLDSSGTH. N6-acetyllysine is present on K1218. Disordered regions lie at residues 1295–1372, 1467–1510, and 1543–1707; these read TTEN…PSAL, AEKS…KSRL, and NSKL…SASE. Composition is skewed to polar residues over residues 1306 to 1319, 1328 to 1344, 1487 to 1505, 1565 to 1588, and 1594 to 1605; these read RETTGSSSHASEPT, EGSSPISGMPQNENPQS, NNLSCPQEDVSSSGQSTNF, NKPVKTSASSRVETHQSEVAQSFS, and TKTQRSQTQTIL. A Phosphoserine modification is found at S1588. Composition is skewed to low complexity over residues 1609–1620 and 1637–1671; these read DTSTPTDCSPDT and APLIATPPRTSQPLSPLISSSSPSSPASPVGQVSP. Phosphoserine is present on S1617. Phosphothreonine is present on T1642. S1692, S1697, S1699, S1701, S1712, S1838, and S1854 each carry phosphoserine. Residues 1809-1902 form a disordered region; the sequence is TGSSSGGDCN…AVSAVSQLPL (94 aa). Positions 1825 to 1843 are enriched in polar residues; the sequence is LGTQQDSSGKRTLSTSTLR. Residues 1889–1901 show a composition bias toward polar residues; it reads CSSPAVSAVSQLP. Phosphoserine is present on S1903.

This sequence belongs to the ICE1 family. Component of the little elongation complex (LEC), at least composed of ELL (ELL, ELL2 or ELL3), ZC3H8, ICE1 and ICE2. Interacts (via N-terminus domain) with ELL. Interacts (via C-terminus domain) with ICE2 and ZC3H8.

It is found in the nucleus. The protein localises to the cajal body. Component of the little elongation complex (LEC), a complex required to regulate small nuclear RNA (snRNA) gene transcription by RNA polymerase II and III. Specifically acts as a scaffold protein that promotes the LEC complex formation and recruitment and RNA polymerase II occupancy at snRNA genes in subnuclear bodies. The sequence is that of Little elongation complex subunit 1 (ICE1) from Homo sapiens (Human).